The sequence spans 407 residues: Fructose-1,6-bisphosphatase, chloroplastic (407 aa).

The N-terminal 50 residues, 1–50, are a transit peptide targeting the chloroplast; that stretch reads MAAATASSQLIFSKPYSPSRLCPFQLCVFDAKSVLSSSRRKHVNGSGVRC. Residues glutamate 126, glutamate 155, aspartate 176, leucine 178, and aspartate 179 each contribute to the Mg(2+) site. 179–182 provides a ligand contact to substrate; the sequence is DGSS. Cysteine 203 and cysteine 223 form a disulfide bridge. Substrate is bound by residues asparagine 287, tyrosine 319, tyrosine 337, tyrosine 339, and lysine 349. Residue glutamate 355 participates in Mg(2+) binding.

This sequence belongs to the FBPase class 1 family. Homotetramer. Requires Mg(2+) as cofactor.

It localises to the plastid. The protein localises to the chloroplast stroma. It catalyses the reaction beta-D-fructose 1,6-bisphosphate + H2O = beta-D-fructose 6-phosphate + phosphate. It functions in the pathway carbohydrate biosynthesis; Calvin cycle. This chain is Fructose-1,6-bisphosphatase, chloroplastic (FBP), found in Pisum sativum (Garden pea).